We begin with the raw amino-acid sequence, 477 residues long: Ribulose bisphosphate carboxylase large chain (477 aa).

A propeptide spanning residues 1-2 is cleaved from the precursor; the sequence is MS. Proline 3 carries the N-acetylproline modification. Lysine 14 carries the N6,N6,N6-trimethyllysine modification. Substrate-binding residues include asparagine 123 and threonine 173. The active-site Proton acceptor is lysine 175. Position 177 (lysine 177) interacts with substrate. Mg(2+)-binding residues include lysine 201, aspartate 203, and glutamate 204. Lysine 201 is modified (N6-carboxylysine). Histidine 294 acts as the Proton acceptor in catalysis. 3 residues coordinate substrate: arginine 295, histidine 327, and serine 379.

The protein belongs to the RuBisCO large chain family. Type I subfamily. As to quaternary structure, heterohexadecamer of 8 large chains and 8 small chains; disulfide-linked. The disulfide link is formed within the large subunit homodimers. The cofactor is Mg(2+). Post-translationally, the disulfide bond which can form in the large chain dimeric partners within the hexadecamer appears to be associated with oxidative stress and protein turnover.

It localises to the plastid. The protein localises to the chloroplast. The catalysed reaction is 2 (2R)-3-phosphoglycerate + 2 H(+) = D-ribulose 1,5-bisphosphate + CO2 + H2O. It carries out the reaction D-ribulose 1,5-bisphosphate + O2 = 2-phosphoglycolate + (2R)-3-phosphoglycerate + 2 H(+). Functionally, ruBisCO catalyzes two reactions: the carboxylation of D-ribulose 1,5-bisphosphate, the primary event in carbon dioxide fixation, as well as the oxidative fragmentation of the pentose substrate in the photorespiration process. Both reactions occur simultaneously and in competition at the same active site. This Manihot esculenta (Cassava) protein is Ribulose bisphosphate carboxylase large chain.